A 689-amino-acid polypeptide reads, in one-letter code: Glycine--tRNA ligase beta subunit (689 aa).

The protein belongs to the class-II aminoacyl-tRNA synthetase family. Tetramer of two alpha and two beta subunits.

The protein resides in the cytoplasm. The enzyme catalyses tRNA(Gly) + glycine + ATP = glycyl-tRNA(Gly) + AMP + diphosphate. In Erwinia tasmaniensis (strain DSM 17950 / CFBP 7177 / CIP 109463 / NCPPB 4357 / Et1/99), this protein is Glycine--tRNA ligase beta subunit.